The chain runs to 562 residues: Arginine--tRNA ligase (562 aa).

Residues 129–139 (ANPTGPLHVGH) carry the 'HIGH' region motif.

Belongs to the class-I aminoacyl-tRNA synthetase family. As to quaternary structure, monomer.

The protein resides in the cytoplasm. It carries out the reaction tRNA(Arg) + L-arginine + ATP = L-arginyl-tRNA(Arg) + AMP + diphosphate. The polypeptide is Arginine--tRNA ligase (Stenotrophomonas maltophilia (strain K279a)).